We begin with the raw amino-acid sequence, 447 residues long: Tetratricopeptide repeat protein 23 (447 aa).

TPR repeat units lie at residues 45–78 (LHLCEEKAKSYSNSHEYKQAVHELVRCVALTRIC), 137–170 (IELFHTMGRALLSLQKFKEAAENLTKAERLSKEL), 186–219 (ARIRLSFAQVYQGQKKSKEALSHYQAALEYVEIS), and 356–389 (AETYRLLGGADLAQGNHSGARKKLKKCLQIQTLL).

In terms of assembly, found Associated with the EvC complex composed of EFCAB7, IQCE, EVC2 and EVC.

The protein localises to the cell projection. It is found in the cilium. Participates positively in the ciliary Hedgehog (Hh) signaling. This chain is Tetratricopeptide repeat protein 23 (TTC23), found in Homo sapiens (Human).